Here is a 250-residue protein sequence, read N- to C-terminus: 3alpha-hydroxysteroid dehydrogenase (250 aa).

NADP(+) contacts are provided by Asn-93, Tyr-158, and Lys-162. Catalysis depends on Tyr-158, which acts as the Proton acceptor.

It belongs to the short-chain dehydrogenases/reductases (SDR) family.

It catalyses the reaction lithocholate + NADP(+) = 3-oxo-5beta-cholan-24-oate + NADPH + H(+). The catalysed reaction is deoxycholate + NADP(+) = 12alpha-hydroxy-3-oxo-5beta-cholan-24-oate + NADPH + H(+). The enzyme catalyses deoxycholate + NAD(+) = 12alpha-hydroxy-3-oxo-5beta-cholan-24-oate + NADH + H(+). It carries out the reaction cholate + NADP(+) = 7alpha,12alpha-dihydroxy-3-oxo-5beta-cholan-24-oate + NADPH + H(+). It catalyses the reaction chenodeoxycholate + NADP(+) = 3-oxochenodeoxycholate + NADPH + H(+). Its function is as follows. Involved in the modification of secondary bile acids into iso-bile acids (3beta-bile acids) via epimerization of the 3-OH group through a 3-oxo-intermediate. Catalyzes the oxidation of deoxycholate (DCA) and lithocholate (LCA) to yield 12-alpha-hydroxy-3-oxo-5-beta-cholan-24-oate (3-oxo-DCA) and 3-oxo-5-beta-cholan-24-oate (3-oxo-LCA), respectively. Is also able to catalyze the oxidation of cholate (CA) and chenodeoxycholate (CDCA) into 3-dehydrocholate (3-oxo-CA) and 7-alpha-hydroxy-3-oxo-5-beta-cholan-24-oate (3-oxo-CDCA), respectively. Can also catalyze the reverse reactions in vitro. Accepts both NADPH and NADH as cosubstrates. The conversion of the abundant bile acid DCA into isoDCA by the gut bacterium R.gnavus favors the growth of the keystone commensal genus Bacteroides, since isoDCA is less cytotoxic than its parent compound, DCA; iso-bile acids have thus a potential role in modulating gut community composition. This Mediterraneibacter gnavus (strain ATCC 29149 / DSM 114966 / JCM 6515 / VPI C7-9) (Ruminococcus gnavus) protein is 3alpha-hydroxysteroid dehydrogenase.